A 344-amino-acid polypeptide reads, in one-letter code: Arginine N-succinyltransferase (344 aa).

Leu125 is a binding site for succinyl-CoA. The Proton donor role is filled by His229.

Belongs to the arginine N-succinyltransferase family.

It catalyses the reaction succinyl-CoA + L-arginine = N(2)-succinyl-L-arginine + CoA + H(+). The protein operates within amino-acid degradation; L-arginine degradation via AST pathway; L-glutamate and succinate from L-arginine: step 1/5. Catalyzes the transfer of succinyl-CoA to arginine to produce N(2)-succinylarginine. This is Arginine N-succinyltransferase from Escherichia coli O157:H7.